The chain runs to 149 residues: Prefoldin subunit alpha (149 aa).

Belongs to the prefoldin alpha subunit family. As to quaternary structure, heterohexamer of two alpha and four beta subunits.

The protein localises to the cytoplasm. In terms of biological role, molecular chaperone capable of stabilizing a range of proteins. Seems to fulfill an ATP-independent, HSP70-like function in archaeal de novo protein folding. The polypeptide is Prefoldin subunit alpha (Methanoculleus marisnigri (strain ATCC 35101 / DSM 1498 / JR1)).